Consider the following 475-residue polypeptide: MNTALAQQIANEGGVEAWMIAQQHKSLLRFLTCGSVDDGKSTLIGRLLHDTRQIYEDQLSSLHNDSKRHGTQGEKLDLALLVDGLQAEREQGITIDVAYRYFSTEKRKFIIADTPGHEQYTRNMATGASTCELAILLIDARKGVLDQTRRHSFISTLLGIKHLVVAINKMDLVDYSEETFTRIREDYLTFAEQLPGNLDIRFVPLSALEGDNVASQSESMPWYSGPTLLEVLETVEIQRVVDAQPMRFPVQYVNRPNLDFRGYAGTLASGRVEVGQRVKVLPSGVESNVARIVTFDGDREEAFAGEAITLVLTDEIDISRGDLLLAADEALPAVQSASVDVVWMAEQPLSPGQSYDIKIAGKKTRARVDGIRYQVDINNLTQREVENLPLNGIGLVDLTFDEPLVLDRYQQNPVTGGLIFIDRLSNVTVGAGMVHEPVSQATAAPSEFSAFELELNALVRRHFPHWGARDLLGDK.

Residues 25–239 (KSLLRFLTCG…EVLETVEIQR (215 aa)) enclose the tr-type G domain. A G1 region spans residues 34 to 41 (GSVDDGKS). Residue 34–41 (GSVDDGKS) coordinates GTP. The G2 stretch occupies residues 92-96 (GITID). The segment at 113-116 (DTPG) is G3. Residues 113–117 (DTPGH) and 168–171 (NKMD) contribute to the GTP site. Positions 168 to 171 (NKMD) are G4. Residues 206–208 (SAL) form a G5 region.

The protein belongs to the TRAFAC class translation factor GTPase superfamily. Classic translation factor GTPase family. CysN/NodQ subfamily. In terms of assembly, heterodimer composed of CysD, the smaller subunit, and CysN.

It carries out the reaction sulfate + ATP + H(+) = adenosine 5'-phosphosulfate + diphosphate. It functions in the pathway sulfur metabolism; hydrogen sulfide biosynthesis; sulfite from sulfate: step 1/3. Its function is as follows. With CysD forms the ATP sulfurylase (ATPS) that catalyzes the adenylation of sulfate producing adenosine 5'-phosphosulfate (APS) and diphosphate, the first enzymatic step in sulfur assimilation pathway. APS synthesis involves the formation of a high-energy phosphoric-sulfuric acid anhydride bond driven by GTP hydrolysis by CysN coupled to ATP hydrolysis by CysD. This Escherichia coli (strain 55989 / EAEC) protein is Sulfate adenylyltransferase subunit 1.